We begin with the raw amino-acid sequence, 74 residues long: Kappa-scoloptoxin(07)-Ssm2d (74 aa).

An N-terminal signal peptide occupies residues 1-19; the sequence is MLVFYALLFVTVFSNTVMG. Residues 20-41 constitute a propeptide that is removed on maturation; that stretch reads ATIDKPIPKPILREAIEEIEVN.

The protein belongs to the scoloptoxin-07 family. Post-translationally, contains 3 disulfide bonds. In terms of tissue distribution, expressed by the venom gland.

It localises to the secreted. Its function is as follows. Inhibits voltage-gated potassium channels. The protein is Kappa-scoloptoxin(07)-Ssm2d of Scolopendra mutilans (Chinese red-headed centipede).